Consider the following 237-residue polypeptide: Endonuclease NucS (237 aa).

It belongs to the NucS endonuclease family.

The protein localises to the cytoplasm. Its function is as follows. Cleaves both 3' and 5' ssDNA extremities of branched DNA structures. In Saccharolobus islandicus (strain L.S.2.15 / Lassen #1) (Sulfolobus islandicus), this protein is Endonuclease NucS.